The primary structure comprises 367 residues: Aminomethyltransferase (367 aa).

It belongs to the GcvT family. As to quaternary structure, the glycine cleavage system is composed of four proteins: P, T, L and H.

It catalyses the reaction N(6)-[(R)-S(8)-aminomethyldihydrolipoyl]-L-lysyl-[protein] + (6S)-5,6,7,8-tetrahydrofolate = N(6)-[(R)-dihydrolipoyl]-L-lysyl-[protein] + (6R)-5,10-methylene-5,6,7,8-tetrahydrofolate + NH4(+). Its function is as follows. The glycine cleavage system catalyzes the degradation of glycine. This Mycobacterium avium (strain 104) protein is Aminomethyltransferase.